Reading from the N-terminus, the 312-residue chain is Olfactory receptor 4F15 (312 aa).

Residues 1-25 (MNGMNHSVVSEFVFMGLTNSREIQL) lie on the Extracellular side of the membrane. N5 carries an N-linked (GlcNAc...) asparagine glycan. The chain crosses the membrane as a helical span at residues 26-49 (LLFVFSLLFYFASMMGNLVIVFTV). The Cytoplasmic segment spans residues 50 to 57 (TMDAHLHS). A helical membrane pass occupies residues 58–79 (PMYFLLANLSIIDMAFCSITAP). Residues 80 to 100 (KMICDIFKKHKAISFRGCITQ) lie on the Extracellular side of the membrane. Residues C97 and C189 are joined by a disulfide bond. A helical membrane pass occupies residues 101–120 (IFFSHALGGTEMVLLIAMAF). Residues 121–139 (DRYMAICKPLHYLTIMSPR) lie on the Cytoplasmic side of the membrane. A helical membrane pass occupies residues 140–158 (MCLYFLATSSIIGLIHSLV). Topologically, residues 159–195 (QLVFVVDLPFCGPNIFDSFYCDLPRLLRLACTNTQEL) are extracellular. A helical transmembrane segment spans residues 196 to 219 (EFMVTVNSGLISVGSFVLLVISYI). The Cytoplasmic segment spans residues 220 to 235 (FILFTVWKHSSGGLAK). Residues 236–258 (ALSTLSAHVTVVILFFGPLMFFY) traverse the membrane as a helical segment. The Extracellular segment spans residues 259–269 (TWPSPTSHLDK). Residues 270–289 (YLAIFDAFITPFLNPVIYTF) traverse the membrane as a helical segment. Over 290–312 (RNKDMKVAMRRLCSRLAHFTKIL) the chain is Cytoplasmic.

Belongs to the G-protein coupled receptor 1 family.

The protein resides in the cell membrane. In terms of biological role, odorant receptor. The polypeptide is Olfactory receptor 4F15 (OR4F15) (Homo sapiens (Human)).